Reading from the N-terminus, the 560-residue chain is Arginine--tRNA ligase (560 aa).

The short motif at 121–131 (PNIAKPFSMGH) is the 'HIGH' region element.

Belongs to the class-I aminoacyl-tRNA synthetase family. In terms of assembly, monomer.

The protein localises to the cytoplasm. The enzyme catalyses tRNA(Arg) + L-arginine + ATP = L-arginyl-tRNA(Arg) + AMP + diphosphate. This chain is Arginine--tRNA ligase, found in Exiguobacterium sp. (strain ATCC BAA-1283 / AT1b).